The chain runs to 129 residues: UPF0047 protein Mb2586c (129 aa).

Belongs to the UPF0047 family.

This Mycobacterium bovis (strain ATCC BAA-935 / AF2122/97) protein is UPF0047 protein Mb2586c.